The sequence spans 82 residues: Small ribosomal subunit protein uS17 (82 aa).

It belongs to the universal ribosomal protein uS17 family. As to quaternary structure, part of the 30S ribosomal subunit.

Its function is as follows. One of the primary rRNA binding proteins, it binds specifically to the 5'-end of 16S ribosomal RNA. The polypeptide is Small ribosomal subunit protein uS17 (Shewanella halifaxensis (strain HAW-EB4)).